Consider the following 488-residue polypeptide: Retinoic acid receptor RXR-alpha (488 aa).

Positions 1–160 (MSSAAMDTKH…GAMASFTKHI (160 aa)) are modulating. Residue K134 forms a Glycyl lysine isopeptide (Lys-Gly) (interchain with G-Cter in SUMO) linkage. Residues 158 to 233 (KHICAICGDR…MGMKREAVQE (76 aa)) constitute a DNA-binding region (nuclear receptor). Residues C161, C164, C178, and C181 each coordinate Zn(2+). The NR C4-type zinc finger occupies 161 to 181 (CAICGDRSSGKHYGVYSCEGC). The segment at 186–191 (KRTVRK) is nuclear localization signal. C197, C203, C213, and C216 together coordinate Zn(2+). The NR C4-type zinc-finger motif lies at 197-216 (CRDSKDCMIDKRQRNRCQYC). The interval 227 to 250 (KREAVQEERQRGKERNENEVESSN) is hinge. Positions 232–244 (QEERQRGKERNEN) are enriched in basic and acidic residues. The segment at 232 to 256 (QEERQRGKERNENEVESSNSANEDM) is disordered. Residues 253–484 (NEDMPVEKIL…TFLMEMLEAP (232 aa)) enclose the NR LBD domain. Residues R342 and A353 each contribute to the 9-cis-retinoate site. R342 and A353 together coordinate all-trans-retinoate. The interval 374–394 (RVLTELVSKMRDMQMDKTELG) is required for nuclear export. The segment at 473 to 484 (IDTFLMEMLEAP) is AF-2.

It belongs to the nuclear hormone receptor family. NR2 subfamily. As to quaternary structure, homodimer. Heterodimer; with a rar molecule. Binds DNA preferentially as a rar/rxr heterodimer. Interacts with coactivator ncoa3 and with senp6. In terms of processing, sumoylated on Lys-134; which negatively regulates transcriptional activity. Desumoylated specifically by SENP6.

It localises to the nucleus. Its function is as follows. Receptor for retinoic acid that acts as a transcription factor. Forms homo- or heterodimers with retinoic acid receptors (rars) and binds to target response elements in response to their ligands, all-trans or 9-cis retinoic acid, to regulate gene expression in various biological processes. The rar/rxr heterodimers bind to the retinoic acid response elements (RARE) composed of tandem 5'-AGGTCA-3' sites known as DR1-DR5 to regulate transcription. The high affinity ligand for rxrs is 9-cis retinoic acid. In the absence of ligand, the rar/rxr heterodimers associate with a multiprotein complex containing transcription corepressors that induce histone deacetylation, chromatin condensation and transcriptional suppression. On ligand binding, the corepressors dissociate from the receptors and coactivators are recruited leading to transcriptional activation. The protein is Retinoic acid receptor RXR-alpha (rxra) of Xenopus laevis (African clawed frog).